The following is a 627-amino-acid chain: DNA mismatch repair protein MutL (627 aa).

The disordered stretch occupies residues 363 to 397; the sequence is FAEPAAREPVAPRYSPAPASGSRPAAPWPNAQPGY. The span at 364-387 shows a compositional bias: low complexity; it reads AEPAAREPVAPRYSPAPASGSRPA.

The protein belongs to the DNA mismatch repair MutL/HexB family.

Its function is as follows. This protein is involved in the repair of mismatches in DNA. It is required for dam-dependent methyl-directed DNA mismatch repair. May act as a 'molecular matchmaker', a protein that promotes the formation of a stable complex between two or more DNA-binding proteins in an ATP-dependent manner without itself being part of a final effector complex. This chain is DNA mismatch repair protein MutL, found in Shigella flexneri serotype 5b (strain 8401).